We begin with the raw amino-acid sequence, 588 residues long: Adenine deaminase (588 aa).

The protein belongs to the metallo-dependent hydrolases superfamily. Adenine deaminase family. Homodimer. Mn(2+) serves as cofactor.

The catalysed reaction is adenine + H2O + H(+) = hypoxanthine + NH4(+). This is Adenine deaminase from Escherichia coli O139:H28 (strain E24377A / ETEC).